The chain runs to 369 residues: Core histone macro-H2A.1 (369 aa).

N6-lactoyllysine; alternate is present on residues K7 and K9. The 76-residue stretch at 15–90 folds into the Histone H2A domain; that stretch reads RSAKAGVIFP…ILLAVANDEE (76 aa). K18 carries the N6-methyllysine modification. An N6-acetyllysine; alternate modification is found at K116. A Glycyl lysine isopeptide (Lys-Gly) (interchain with G-Cter in ubiquitin); alternate cross-link involves residue K116. K117 is covalently cross-linked (Glycyl lysine isopeptide (Lys-Gly) (interchain with G-Cter in ubiquitin)). K123 carries the N6-acetyllysine; alternate modification. At K123 the chain carries N6,N6-dimethyllysine; alternate. Residue K123 forms a Glycyl lysine isopeptide (Lys-Gly) (interchain with G-Cter in SUMO2); alternate linkage. The disordered stretch occupies residues 128–180; sequence ITPPPAKKAKSPSQKKTVSKKTGGKKGARKSKKKQGEVSKSASADSTTEGTPA. T129 bears the Phosphothreonine mark. Residues 144–160 show a composition bias toward basic residues; that stretch reads TVSKKTGGKKGARKSKK. Residues 165-177 show a composition bias toward polar residues; the sequence is VSKSASADSTTEG. K167 participates in a covalent cross-link: Glycyl lysine isopeptide (Lys-Gly) (interchain with G-Cter in SUMO2). 2 positions are modified to phosphoserine: S170 and S173. The residue at position 178 (T178) is a Phosphothreonine. In terms of domain architecture, Macro spans 184–367; the sequence is TVLSTKSLFL…IYVQEMAKLD (184 aa). K189 is covalently cross-linked (Glycyl lysine isopeptide (Lys-Gly) (interchain with G-Cter in SUMO2)). Positions 203, 204, 226, 275, 312, 313, 314, and 316 each coordinate a glycoprotein. K320 participates in a covalent cross-link: Glycyl lysine isopeptide (Lys-Gly) (interchain with G-Cter in SUMO2).

The protein belongs to the histone H2A family. The nucleosome is a histone octamer containing two molecules each of H2A, H2B, H3 and H4 assembled in one H3-H4 heterotetramer and two H2A-H2B heterodimers. Post-translationally, ADP-ribosylated. In terms of processing, monoubiquitinated at either Lys-116 or Lys-117. May also be polyubiquitinated. Ubiquitination is mediated by the CUL3/SPOP E3 complex and does not promote proteasomal degradation. Instead, it is required for enrichment in inactive X chromosome chromatin. Present in liver (at protein level).

The protein resides in the nucleus. Its subcellular location is the chromosome. Its function is as follows. Variant histone H2A which replaces conventional H2A in a subset of nucleosomes where it represses transcription. Nucleosomes wrap and compact DNA into chromatin, limiting DNA accessibility to the cellular machineries which require DNA as a template. Histones thereby play a central role in transcription regulation, DNA repair, DNA replication and chromosomal stability. DNA accessibility is regulated via a complex set of post-translational modifications of histones, also called histone code, and nucleosome remodeling. In terms of biological role, isoform that specifically binds poly-ADP-ribose and O-acetyl-ADP-ribose and plays a key role in NAD(+) metabolism. Able to bind to the ends of poly-ADP-ribose chains created by PARP1 and cap them. This prevents PARP1 from further addition of ADP-ribose and thus limits the consumption of nuclear NAD(+), allowing the cell to maintain proper NAD(+) levels in both the nucleus and the mitochondria to promote proper mitochondrial respiration. In contrast to isoform 1, does not bind poly-ADP-ribose. This is Core histone macro-H2A.1 from Gallus gallus (Chicken).